The chain runs to 119 residues: Large ribosomal subunit protein uL18 (119 aa).

Belongs to the universal ribosomal protein uL18 family. As to quaternary structure, part of the 50S ribosomal subunit; part of the 5S rRNA/L5/L18/L25 subcomplex. Contacts the 5S and 23S rRNAs.

Functionally, this is one of the proteins that bind and probably mediate the attachment of the 5S RNA into the large ribosomal subunit, where it forms part of the central protuberance. The polypeptide is Large ribosomal subunit protein uL18 (Anaeromyxobacter dehalogenans (strain 2CP-C)).